An 873-amino-acid polypeptide reads, in one-letter code: Alanine--tRNA ligase (873 aa).

Positions 559, 563, 661, and 665 each coordinate Zn(2+).

Belongs to the class-II aminoacyl-tRNA synthetase family. As to quaternary structure, homotetramer. The cofactor is Zn(2+).

The protein localises to the cytoplasm. It carries out the reaction tRNA(Ala) + L-alanine + ATP = L-alanyl-tRNA(Ala) + AMP + diphosphate. Its function is as follows. Catalyzes the attachment of alanine to tRNA(Ala) in a two-step reaction: alanine is first activated by ATP to form Ala-AMP and then transferred to the acceptor end of tRNA(Ala). Also edits incorrectly charged Ser-tRNA(Ala) and Gly-tRNA(Ala) via its editing domain. This is Alanine--tRNA ligase from Wigglesworthia glossinidia brevipalpis.